Reading from the N-terminus, the 216-residue chain is Ras-related protein YPTC6 (216 aa).

Position 19–26 (19–26) interacts with GTP; the sequence is GDSGVGKS. The short motif at 41–49 is the Effector region element; sequence SKSTIGVEF. Residues 67 to 71 and 125 to 128 contribute to the GTP site; these read DTAGQ and NKSD. S-geranylgeranyl cysteine attachment occurs at residues cysteine 214 and cysteine 215.

This sequence belongs to the small GTPase superfamily. Rab family.

It is found in the cell membrane. The polypeptide is Ras-related protein YPTC6 (YPTC6) (Chlamydomonas reinhardtii (Chlamydomonas smithii)).